The primary structure comprises 44 residues: Protein PsbN (44 aa).

A helical membrane pass occupies residues 6 to 26 (FFFTIFLWFFLLSITAYSIYV).

Belongs to the PsbN family.

It is found in the plastid. The protein resides in the chloroplast thylakoid membrane. Functionally, may play a role in photosystem I and II biogenesis. The chain is Protein PsbN from Stigeoclonium helveticum (Green alga).